A 35-amino-acid chain; its full sequence is Sperm-specific protein Phi-1 (35 aa).

Composition is skewed to basic residues over residues 1-17 and 25-35; these read PSPT…RSRS and AAKRAKSKTAK. The segment at 1-35 is disordered; that stretch reads PSPTRRSKSRSKSRSRSRSASAGKAAKRAKSKTAK.

As to expression, sperm.

It is found in the nucleus. Its subcellular location is the chromosome. Functionally, involved in nuclear basic protein transition: histones are replaced by spermatid specific proteins which are themselves replaced by protamines in late spermatids. The polypeptide is Sperm-specific protein Phi-1 (Mytilus californianus (California mussel)).